A 240-amino-acid chain; its full sequence is MTELPIDENTPRILIVEDEPKLGQLLIDYLRAASYAPTLISHGDQVLPYVRQTPPDLILLDLMLPGTDGLTLCREIRRFSDIPIVMVTAKIEEIDRLLGLEIGADDYICKPYSPREVVARVKTILRRCKPQRELQQQDAESPLIIDEGRFQASWRGKMLDLTPAEFRLLKTLSHEPGKVFSREQLLNHLYDDYRVVTDRTIDSHIKNLRRKLESLDAEQSFIRAVYGVGYRWEADACRIV.

The 114-residue stretch at 12–125 (RILIVEDEPK…EVVARVKTIL (114 aa)) folds into the Response regulatory domain. At Asp-61 the chain carries 4-aspartylphosphate. The segment at residues 131–234 (QRELQQQDAE…VYGVGYRWEA (104 aa)) is a DNA-binding region (ompR/PhoB-type).

In terms of processing, phosphorylated by BaeS.

It is found in the cytoplasm. Member of the two-component regulatory system BaeS/BaeR. Activates the mdtABCD operon. The sequence is that of Transcriptional regulatory protein BaeR (baeR) from Escherichia coli O6:H1 (strain CFT073 / ATCC 700928 / UPEC).